The chain runs to 317 residues: DNA repair nuclease/redox regulator APEX1 (317 aa).

The interval 1–32 (MPKRGKRAAAEDGEEPKSEPETKKSKGAAKKT) is necessary for interaction with YBX1, binding to RNA, association together with NPM1 to rRNA, endoribonuclease activity on abasic RNA and localization in the nucleoli. The disordered stretch occupies residues 1 to 57 (MPKRGKRAAAEDGEEPKSEPETKKSKGAAKKTEKEAAGEGPVLYEDPPDQKTSASGK). Residue K6 is modified to N6-acetyllysine; by EP300. The short motif at 8–12 (AAAED) is the Nuclear localization signal (NLS) element. Over residues 15 to 37 (EPKSEPETKKSKGAAKKTEKEAA) the composition is skewed to basic and acidic residues. S18 bears the Phosphoserine mark. Residues 22 to 32 (TKKSKGAAKKT) are necessary for interaction with NPM1 and for efficient rRNA binding. K26, K30, K31, and K34 each carry N6-acetyllysine. S53 bears the Phosphoserine mark. Positions 63 to 79 (ICSWNVDGLRAWIKKKG) match the Nuclear export signal (NES) motif. C64 is modified (S-nitrosocysteine; alternate). Residues C64 and C92 are joined by a disulfide bond. D69 is a binding site for Mg(2+). C92 is subject to S-nitrosocysteine; alternate. E95 contacts Mg(2+). Y170 is an active-site residue. Residue K196 is modified to N6-acetyllysine. Mg(2+) is bound by residues D209 and N211. Residue D209 is the Proton donor/acceptor of the active site. T232 carries the phosphothreonine; by CDK5 modification. Residues 288–317 (HSLLPALCDSKIRSKALGSDHCPITLYLAL) form a mitochondrial targeting sequence (MTS) region. D307 serves as a coordination point for Mg(2+). C309 is modified (S-nitrosocysteine).

It belongs to the DNA repair enzymes AP/ExoA family. In terms of assembly, monomer. Homodimer; disulfide-linked. Component of the SET complex, composed of at least APEX1, SET, ANP32A, HMGB2, NME1 and TREX1. Associates with the dimer XRCC5/XRCC6 in a DNA-dependent manner. Interacts with SIRT1; the interaction is increased in the context of genotoxic stress. Interacts with HDAC1, HDAC2 and HDAC3; the interactions are not dependent on the APEX1 acetylation status. Interacts with XRCC1; the interaction is induced by SIRT1 and increased with the APEX1 acetylated form. Interacts with NPM1 (via N-terminal domain); the interaction is RNA-dependent and decreases in hydrogen peroxide-damaged cells. Interacts (via N-terminus) with YBX1 (via C-terminus); the interaction is increased in presence of APEX1 acetylated. Interacts with HNRNPL; the interaction is DNA-dependent. Interacts (via N-terminus) with KPNA1 and KPNA2. Interacts with TXN; the interaction stimulates the FOS/JUN AP-1 complex DNA-binding activity in a redox-dependent manner. Interacts with GZMA, KRT8, MDM2, POLB, PRDX6, PRPF19, RPLP0, TOMM20 and WDR77. Binds to CDK5. The cofactor is Mg(2+). Mn(2+) serves as cofactor. Post-translationally, phosphorylated. Phosphorylation by kinase PKC or casein kinase CK2 results in enhanced redox activity that stimulates binding of the FOS/JUN AP-1 complex to its cognate binding site. AP-endodeoxyribonuclease activity is not affected by CK2-mediated phosphorylation. Phosphorylation of Thr-232 by CDK5 in response to MPP(+)/MPTP (1-methyl-4-phenylpyridinium) reduces AP-endodeoxyribonuclease activity resulting in accumulation of DNA damage and contributing to neuronal death. Acetylated on Lys-6. Acetylation is increased by the transcriptional coactivator EP300 acetyltransferase, genotoxic agents like H(2)O(2) and methyl methanesulfonate (MMS). Acetylation increases its binding affinity to the negative calcium response element (nCaRE) DNA promoter. The acetylated form induces a stronger binding of YBX1 to the Y-box sequence in the MDR1 promoter than the unacetylated form. Deacetylated on lysines. Lys-6 is deacetylated by SIRT1. In terms of processing, cleaved at Lys-30 by granzyme A to create the mitochondrial form; leading in reduction of binding to DNA, AP endodeoxyribonuclease activity, redox activation of transcription factors and to enhanced cell death. Cleaved by granzyme K; leading to intracellular ROS accumulation and enhanced cell death after oxidative stress. Post-translationally, cys-64 and Cys-92 are nitrosylated in response to nitric oxide (NO) and lead to the exposure of the nuclear export signal (NES). Ubiquitinated by MDM2; leading to translocation to the cytoplasm and proteasomal degradation.

It is found in the nucleus. It localises to the nucleolus. The protein resides in the nucleus speckle. The protein localises to the endoplasmic reticulum. Its subcellular location is the cytoplasm. It is found in the mitochondrion. It carries out the reaction a deoxyribonucleotide-2'-deoxyribose-5'-monophosphate-DNA + H2O = a 5'-end 2'-deoxyribose-5'-monophosphate-DNA + a 3'-end 2'-deoxyribonucleotide-DNA + H(+). It catalyses the reaction Exonucleolytic cleavage in the 3'- to 5'-direction to yield nucleoside 5'-phosphates.. The catalysed reaction is a 3'-end 2'-deoxyribonucleotide-3'-phosphoglycolate-DNA + H2O = 2-phosphoglycolate + a 3'-end 2'-deoxyribonucleotide-DNA + H(+). The enzyme catalyses a 3'-end 2'-deoxyribonucleotide-8-oxoguanine-DNA + H2O = 8-oxo-dGMP + a 3'-end 2'-deoxyribonucleotide-DNA + H(+). Its activity is regulated as follows. NPM1 stimulates endodeoxyribonuclease activity on double-stranded DNA with AP sites, but inhibits endoribonuclease activity on single-stranded RNA containing AP sites. Functionally, multifunctional protein that plays a central role in the cellular response to oxidative stress. The two major activities of APEX1 are DNA repair and redox regulation of transcriptional factors. Functions as an apurinic/apyrimidinic (AP) endodeoxyribonuclease in the base excision repair (BER) pathway of DNA lesions induced by oxidative and alkylating agents. Initiates repair of AP sites in DNA by catalyzing hydrolytic incision of the phosphodiester backbone immediately adjacent to the damage, generating a single-strand break with 5'-deoxyribose phosphate and 3'-hydroxyl ends. Also incises at AP sites in the DNA strand of DNA/RNA hybrids, single-stranded DNA regions of R-loop structures, and single-stranded RNA molecules. Operates at switch sites of immunoglobulin (Ig) constant regions where it mediates Ig isotype class switch recombination. Processes AP sites induced by successive action of AICDA and UNG. Generates staggered nicks in opposite DNA strands resulting in the formation of double-strand DNA breaks that are finally resolved via non-homologous end joining repair pathway. Has 3'-5' exodeoxyribonuclease activity on mismatched deoxyribonucleotides at the 3' termini of nicked or gapped DNA molecules during short-patch BER. Possesses DNA 3' phosphodiesterase activity capable of removing lesions (such as phosphoglycolate and 8-oxoguanine) blocking the 3' side of DNA strand breaks. Also acts as an endoribonuclease involved in the control of single-stranded RNA metabolism. Plays a role in regulating MYC mRNA turnover by preferentially cleaving in between UA and CA dinucleotides of the MYC coding region determinant (CRD). In association with NMD1, plays a role in the rRNA quality control process during cell cycle progression. Acts as a loading factor for POLB onto non-incised AP sites in DNA and stimulates the 5'-terminal deoxyribose 5'-phosphate (dRp) excision activity of POLB. Exerts reversible nuclear redox activity to regulate DNA binding affinity and transcriptional activity of transcriptional factors by controlling the redox status of their DNA-binding domain, such as the FOS/JUN AP-1 complex after exposure to IR. Involved in calcium-dependent down-regulation of parathyroid hormone (PTH) expression by binding to negative calcium response elements (nCaREs). Together with HNRNPL or the dimer XRCC5/XRCC6, associates with nCaRE, acting as an activator of transcriptional repression. May also play a role in the epigenetic regulation of gene expression by participating in DNA demethylation. Stimulates the YBX1-mediated MDR1 promoter activity, when acetylated at Lys-6 and Lys-7, leading to drug resistance. Plays a role in protection from granzyme-mediated cellular repair leading to cell death. Binds DNA and RNA. Associates, together with YBX1, on the MDR1 promoter. Together with NPM1, associates with rRNA. The polypeptide is DNA repair nuclease/redox regulator APEX1 (Apex1) (Rattus norvegicus (Rat)).